The sequence spans 1013 residues: MKMKIIVLFLYYCYIGSTSSVLASIDNVNELSVLLSVKSTLVDPLNFLKDWKLSDTSDHCNWTGVRCNSNGNVEKLDLAGMNLTGKISDSISQLSSLVSFNISCNGFESLLPKSIPPLKSIDISQNSFSGSLFLFSNESLGLVHLNASGNNLSGNLTEDLGNLVSLEVLDLRGNFFQGSLPSSFKNLQKLRFLGLSGNNLTGELPSVLGQLPSLETAILGYNEFKGPIPPEFGNINSLKYLDLAIGKLSGEIPSELGKLKSLETLLLYENNFTGTIPREIGSITTLKVLDFSDNALTGEIPMEITKLKNLQLLNLMRNKLSGSIPPAISSLAQLQVLELWNNTLSGELPSDLGKNSPLQWLDVSSNSFSGEIPSTLCNKGNLTKLILFNNTFTGQIPATLSTCQSLVRVRMQNNLLNGSIPIGFGKLEKLQRLELAGNRLSGGIPGDISDSVSLSFIDFSRNQIRSSLPSTILSIHNLQAFLVADNFISGEVPDQFQDCPSLSNLDLSSNTLTGTIPSSIASCEKLVSLNLRNNNLTGEIPRQITTMSALAVLDLSNNSLTGVLPESIGTSPALELLNVSYNKLTGPVPINGFLKTINPDDLRGNSGLCGGVLPPCSKFQRATSSHSSLHGKRIVAGWLIGIASVLALGILTIVTRTLYKKWYSNGFCGDETASKGEWPWRLMAFHRLGFTASDILACIKESNMIGMGATGIVYKAEMSRSSTVLAVKKLWRSAADIEDGTTGDFVGEVNLLGKLRHRNIVRLLGFLYNDKNMMIVYEFMLNGNLGDAIHGKNAAGRLLVDWVSRYNIALGVAHGLAYLHHDCHPPVIHRDIKSNNILLDANLDARIADFGLARMMARKKETVSMVAGSYGYIAPEYGYTLKVDEKIDIYSYGVVLLELLTGRRPLEPEFGESVDIVEWVRRKIRDNISLEEALDPNVGNCRYVQEEMLLVLQIALLCTTKLPKDRPSMRDVISMLGEAKPRRKSNSNEENTSRSLAEKHSSVFSTSPVNGLL.

The N-terminal stretch at 1-23 (MKMKIIVLFLYYCYIGSTSSVLA) is a signal peptide. Over 24 to 633 (SIDNVNELSV…SSHSSLHGKR (610 aa)) the chain is Extracellular. Asparagine 61, asparagine 82, asparagine 101, asparagine 137, asparagine 146, asparagine 151, and asparagine 155 each carry an N-linked (GlcNAc...) asparagine glycan. 22 LRR repeats span residues 70-94 (NGNV…ISQL), 95-117 (SSLV…SIPP), 119-137 (KSID…LFSN), 139-163 (SLGL…LGNL), 164-186 (VSLE…SFKN), 187-213 (LQKL…QLPS), 215-234 (ETAI…EFGN), 235-259 (INSL…LGKL), 260-283 (KSLE…IGSI), 284-307 (TTLK…ITKL), 308-331 (KNLQ…ISSL), 333-355 (QLQV…LGKN), 357-379 (PLQW…LCNK), 381-403 (NLTK…LSTC), 405-426 (SLVR…GFGK), 427-451 (LEKL…ISDS), 453-475 (SLSF…ILSI), 477-498 (NLQA…QFQD), 499-523 (CPSL…IASC), 525-547 (KLVS…ITTM), 548-571 (SALA…IGTS), and 573-595 (ALEL…GFLK). N-linked (GlcNAc...) asparagine glycosylation occurs at asparagine 199. A glycan (N-linked (GlcNAc...) asparagine) is linked at asparagine 271. Asparagine 341 carries an N-linked (GlcNAc...) asparagine glycan. 3 N-linked (GlcNAc...) asparagine glycosylation sites follow: asparagine 381, asparagine 389, and asparagine 417. N-linked (GlcNAc...) asparagine glycans are attached at residues asparagine 535, asparagine 557, and asparagine 578. A helical membrane pass occupies residues 634 to 654 (IVAGWLIGIASVLALGILTIV). Over 655–1013 (TRTLYKKWYS…FSTSPVNGLL (359 aa)) the chain is Cytoplasmic. Threonine 691 carries the post-translational modification Phosphothreonine. The region spanning 699 to 983 (IKESNMIGMG…SMLGEAKPRR (285 aa)) is the Protein kinase domain. ATP contacts are provided by residues 705–713 (IGMGATGIV) and lysine 728. Position 710 is a phosphothreonine; by autocatalysis (threonine 710). A phosphothreonine; by autocatalysis mark is found at threonine 741 and threonine 742. Phosphotyrosine occurs at positions 777 and 818. The active-site Proton acceptor is aspartate 831. The residue at position 862 (threonine 862) is a Phosphothreonine; by autocatalysis. Serine 864 bears the Phosphoserine; by autocatalysis mark. Tyrosine 872 is subject to Phosphotyrosine. A Phosphotyrosine; by autocatalysis modification is found at tyrosine 879. A phosphothreonine; by autocatalysis mark is found at threonine 880 and threonine 992. Residues 976 to 1013 (LGEAKPRRKSNSNEENTSRSLAEKHSSVFSTSPVNGLL) are disordered. A compositionally biased stretch (polar residues) spans 1002 to 1013 (SVFSTSPVNGLL).

Belongs to the protein kinase superfamily. Ser/Thr protein kinase family. Homodimer. Interacts with MDIS1 and LURE1.2. In terms of processing, autophosphorylation induced by the interaction with LURE1.2. In terms of tissue distribution, expressed in pollen tubes.

The protein localises to the cell membrane. It catalyses the reaction L-seryl-[protein] + ATP = O-phospho-L-seryl-[protein] + ADP + H(+). It carries out the reaction L-threonyl-[protein] + ATP = O-phospho-L-threonyl-[protein] + ADP + H(+). Its function is as follows. Involved in the regulation of procambium maintenance and polarity during vascular-tissue development. Involved in the pollen tube perception of the female signal. Phosphorylates MDSI1. In Arabidopsis thaliana (Mouse-ear cress), this protein is MDIS1-interacting receptor like kinase 1.